The chain runs to 517 residues: Ribonuclease Y (517 aa).

A helical membrane pass occupies residues 2–22 (EILVYIIIGIAIFILSLLVGI). Residues 207-267 (TTSTVALPTD…LRREIAKRTL (61 aa)) enclose the KH domain. The HD domain occupies 333-426 (VLEHSIEVAQ…VAASDALSAS (94 aa)).

The protein belongs to the RNase Y family.

It localises to the cell membrane. In terms of biological role, endoribonuclease that initiates mRNA decay. This Petrotoga mobilis (strain DSM 10674 / SJ95) protein is Ribonuclease Y.